The chain runs to 478 residues: Cytochrome P450 family 716 subfamily AD polypeptide 4 (478 aa).

The helical transmembrane segment at 1–21 (MELFLPSVLLILTVFCFYYLF) threads the bilayer. Cys-425 is a binding site for heme.

Belongs to the cytochrome P450 family. Heme is required as a cofactor. As to expression, mainly expressed in petioles and, to a lower extent, in roots.

It localises to the membrane. It carries out the reaction (1S,3bR,4R,5aR,9aR,9bR,11aS)-1-[(4R)-5-[(2S)-3,3-dimethyloxiran-2-yl]-1,4-dihydroxybutan-2-yl]-3b,6,6,9a,11a-pentamethyl-7-oxo-1H,2H,3bH,4H,5H,5aH,6H,7H,9aH,9bH,10H,11H,11aH-cyclopenta[a]phenanthren-4-yl acetate + reduced [NADPH--hemoprotein reductase] + O2 = (1S,3bR,4R,5aR,9aR,9bR,11aS)-1-(1-hydroxy-4-oxobutan-2-yl)-3b,6,6,9a,11a-pentamethyl-7-oxo-1H,2H,3bH,4H,5H,5aH,6H,7H,9aH,9bH,10H,11H,11aH-cyclopenta[a]phenanthren-4-yl acetate + 2-methylpropanoate + oxidized [NADPH--hemoprotein reductase] + H2O + 2 H(+). It functions in the pathway secondary metabolite biosynthesis; terpenoid biosynthesis. Functionally, monooxygenase involved in the biosynthesis of limonoids triterpene natural products such as azadirachtin, an antifeedant widely used as bioinsecticide, and possessing many medicinal applications including anti-tumoral, anti-malarial, anti-rheumatic, antibacterial, anti-inflammatory, anti-pyretic and diuretic effects. Catalyzes the formation of (1S,3bR,4R,5aR,9aR,9bR,11aS)-1-(1-hydroxy-4-oxobutan-2-yl)-3b,6,6,9a,11a-pentamethyl-7-oxo-1H,2H,3bH,4H,5H,5aH,6H,7H,9aH,9bH,10H,11H,11aH-cyclopenta[a]phenanthren-4-yl acetate. This is Cytochrome P450 family 716 subfamily AD polypeptide 4 from Melia azedarach (Chinaberry tree).